A 729-amino-acid chain; its full sequence is Translation initiation factor IF-2 (729 aa).

A disordered region spans residues 20–141; the sequence is QFAGGGRGPG…TTTVRAPVRP (122 aa). The span at 22 to 91 shows a compositional bias: gly residues; it reads AGGGRGPGNP…PGGGRGGGRG (70 aa). The span at 92–108 shows a compositional bias: basic and acidic residues; sequence GDGRRRDESFVENEGGR. The span at 112-127 shows a compositional bias: low complexity; sequence SGRTTSTATTARTPGG. Residues 229–396 form the tr-type G domain; the sequence is PRPPVVTIMG…IILLVADLNE (168 aa). Residues 238-245 are G1; that stretch reads GHVDHGKT. A GTP-binding site is contributed by 238–245; sequence GHVDHGKT. The interval 263 to 267 is G2; that stretch reads GITQH. Positions 284 to 287 are G3; it reads DTPG. GTP is bound by residues 284–288 and 338–341; these read DTPGH and NKID. The segment at 338–341 is G4; it reads NKID. Residues 374–376 are G5; it reads SAK.

The protein belongs to the TRAFAC class translation factor GTPase superfamily. Classic translation factor GTPase family. IF-2 subfamily.

The protein resides in the cytoplasm. Its function is as follows. One of the essential components for the initiation of protein synthesis. Protects formylmethionyl-tRNA from spontaneous hydrolysis and promotes its binding to the 30S ribosomal subunits. Also involved in the hydrolysis of GTP during the formation of the 70S ribosomal complex. The protein is Translation initiation factor IF-2 of Roseiflexus sp. (strain RS-1).